Here is a 34-residue protein sequence, read N- to C-terminus: Photosystem II reaction center protein M (34 aa).

The helical transmembrane segment at 5-25 threads the bilayer; it reads ILAFIATTLFVLVPTAFLLII.

This sequence belongs to the PsbM family. PSII is composed of 1 copy each of membrane proteins PsbA, PsbB, PsbC, PsbD, PsbE, PsbF, PsbH, PsbI, PsbJ, PsbK, PsbL, PsbM, PsbT, PsbX, PsbY, PsbZ, Psb30/Ycf12, at least 3 peripheral proteins of the oxygen-evolving complex and a large number of cofactors. It forms dimeric complexes.

It is found in the plastid. The protein resides in the chloroplast thylakoid membrane. One of the components of the core complex of photosystem II (PSII). PSII is a light-driven water:plastoquinone oxidoreductase that uses light energy to abstract electrons from H(2)O, generating O(2) and a proton gradient subsequently used for ATP formation. It consists of a core antenna complex that captures photons, and an electron transfer chain that converts photonic excitation into a charge separation. This subunit is found at the monomer-monomer interface. The sequence is that of Photosystem II reaction center protein M from Citrus sinensis (Sweet orange).